Here is a 155-residue protein sequence, read N- to C-terminus: Ciliary microtubule inner protein 2C (155 aa).

This sequence belongs to the CIMIP2 family.

Its subcellular location is the cytoplasm. It is found in the cytoskeleton. The protein resides in the cilium axoneme. Microtubule inner protein (MIP) part of the dynein-decorated doublet microtubules (DMTs) in cilia axoneme, which is required for motile cilia beating. This chain is Ciliary microtubule inner protein 2C (cimip2cb), found in Xenopus laevis (African clawed frog).